A 259-amino-acid polypeptide reads, in one-letter code: 1-(5-phosphoribosyl)-5-[(5-phosphoribosylamino)methylideneamino] imidazole-4-carboxamide isomerase (259 aa).

Asp-8 (proton acceptor) is an active-site residue. The active-site Proton donor is Asp-129.

It belongs to the HisA/HisF family.

Its subcellular location is the cytoplasm. It catalyses the reaction 1-(5-phospho-beta-D-ribosyl)-5-[(5-phospho-beta-D-ribosylamino)methylideneamino]imidazole-4-carboxamide = 5-[(5-phospho-1-deoxy-D-ribulos-1-ylimino)methylamino]-1-(5-phospho-beta-D-ribosyl)imidazole-4-carboxamide. Its pathway is amino-acid biosynthesis; L-histidine biosynthesis; L-histidine from 5-phospho-alpha-D-ribose 1-diphosphate: step 4/9. The chain is 1-(5-phosphoribosyl)-5-[(5-phosphoribosylamino)methylideneamino] imidazole-4-carboxamide isomerase from Pelotomaculum thermopropionicum (strain DSM 13744 / JCM 10971 / SI).